The sequence spans 417 residues: Gamma-glutamyl phosphate reductase (417 aa).

This sequence belongs to the gamma-glutamyl phosphate reductase family.

It localises to the cytoplasm. The enzyme catalyses L-glutamate 5-semialdehyde + phosphate + NADP(+) = L-glutamyl 5-phosphate + NADPH + H(+). The protein operates within amino-acid biosynthesis; L-proline biosynthesis; L-glutamate 5-semialdehyde from L-glutamate: step 2/2. Functionally, catalyzes the NADPH-dependent reduction of L-glutamate 5-phosphate into L-glutamate 5-semialdehyde and phosphate. The product spontaneously undergoes cyclization to form 1-pyrroline-5-carboxylate. The sequence is that of Gamma-glutamyl phosphate reductase from Legionella pneumophila subsp. pneumophila (strain Philadelphia 1 / ATCC 33152 / DSM 7513).